The primary structure comprises 430 residues: 3-phosphoshikimate 1-carboxyvinyltransferase (430 aa).

Residues Lys-23, Ser-24, and Arg-28 each contribute to the 3-phosphoshikimate site. Lys-23 serves as a coordination point for phosphoenolpyruvate. 2 residues coordinate phosphoenolpyruvate: Gly-93 and Arg-121. Residues Ser-166, Gln-168, Asp-313, and Lys-340 each coordinate 3-phosphoshikimate. Gln-168 contributes to the phosphoenolpyruvate binding site. Residue Asp-313 is the Proton acceptor of the active site. Residues Arg-344 and Arg-386 each contribute to the phosphoenolpyruvate site.

The protein belongs to the EPSP synthase family. As to quaternary structure, monomer.

It is found in the cytoplasm. It carries out the reaction 3-phosphoshikimate + phosphoenolpyruvate = 5-O-(1-carboxyvinyl)-3-phosphoshikimate + phosphate. It participates in metabolic intermediate biosynthesis; chorismate biosynthesis; chorismate from D-erythrose 4-phosphate and phosphoenolpyruvate: step 6/7. Functionally, catalyzes the transfer of the enolpyruvyl moiety of phosphoenolpyruvate (PEP) to the 5-hydroxyl of shikimate-3-phosphate (S3P) to produce enolpyruvyl shikimate-3-phosphate and inorganic phosphate. In Anaeromyxobacter sp. (strain Fw109-5), this protein is 3-phosphoshikimate 1-carboxyvinyltransferase.